We begin with the raw amino-acid sequence, 132 residues long: Protein C10 (132 aa).

An N-acetylalanine modification is found at Ala2.

Belongs to the UPF0456 family.

Its subcellular location is the cytoplasm. Its function is as follows. In brain, may be required for corpus callosum development. This chain is Protein C10, found in Bos taurus (Bovine).